The following is a 348-amino-acid chain: MKRYLITSDGTVIAGYGYGSPVTGYGELVFTTSMTGYLESMTDPSYVGQILVFASPTIANYELRKGVMESDRVKVSGIVTRDAHINMPAGTLGLDFDRFLRDEGIPAIDGVDTRLLVRKIRQGGVLRAYIADDPQGHSDFPDPMSENLVARAVDARGVKNIRGKGERRILFIDLGSKKTLRDMMLEHFSLIMASADSDLDAIDKYDAIFVSNGPGDPDHPSLRPVVNFLKRNIGVKPIFGICFGLQIIALAYGSKTYKMKFGHRGSNHAVTDGNRIYVTTHNHGYAVDPDTVRDFHVRERDINDGTIEMIEDGMMMAVQYHPEASPGPHDTRWFFSEMRRRTEDAAKG.

The segment at 1-167 (MKRYLITSDG…VKNIRGKGER (167 aa)) is CPSase. L-glutamine contacts are provided by S45, G213, and G215. A Glutamine amidotransferase type-1 domain is found at 168 to 348 (RILFIDLGSK…RRRTEDAAKG (181 aa)). C242 acts as the Nucleophile in catalysis. L-glutamine contacts are provided by F243, Q246, N282, G284, and Y285. Residues H321 and E323 contribute to the active site.

It belongs to the CarA family. As to quaternary structure, composed of two chains; the small (or glutamine) chain promotes the hydrolysis of glutamine to ammonia, which is used by the large (or ammonia) chain to synthesize carbamoyl phosphate. Tetramer of heterodimers (alpha,beta)4.

The enzyme catalyses hydrogencarbonate + L-glutamine + 2 ATP + H2O = carbamoyl phosphate + L-glutamate + 2 ADP + phosphate + 2 H(+). It carries out the reaction L-glutamine + H2O = L-glutamate + NH4(+). It functions in the pathway amino-acid biosynthesis; L-arginine biosynthesis; carbamoyl phosphate from bicarbonate: step 1/1. It participates in pyrimidine metabolism; UMP biosynthesis via de novo pathway; (S)-dihydroorotate from bicarbonate: step 1/3. Small subunit of the glutamine-dependent carbamoyl phosphate synthetase (CPSase). CPSase catalyzes the formation of carbamoyl phosphate from the ammonia moiety of glutamine, carbonate, and phosphate donated by ATP, constituting the first step of 2 biosynthetic pathways, one leading to arginine and/or urea and the other to pyrimidine nucleotides. The small subunit (glutamine amidotransferase) binds and cleaves glutamine to supply the large subunit with the substrate ammonia. The polypeptide is Carbamoyl phosphate synthase small chain (Thermoplasma acidophilum (strain ATCC 25905 / DSM 1728 / JCM 9062 / NBRC 15155 / AMRC-C165)).